The chain runs to 127 residues: Small ribosomal subunit protein uS11 (127 aa).

This sequence belongs to the universal ribosomal protein uS11 family. Part of the 30S ribosomal subunit.

Located on the platform of the 30S subunit. This is Small ribosomal subunit protein uS11 from Halobacterium salinarum (strain ATCC 700922 / JCM 11081 / NRC-1) (Halobacterium halobium).